Consider the following 249-residue polypeptide: ATP synthase subunit a, chloroplastic (249 aa).

A run of 5 helical transmembrane segments spans residues 38–58 (AQVL…AVLA), 97–117 (VPFI…GALL), 136–156 (INTT…AGLH), 201–221 (LVVA…MMFL), and 222–242 (GLFT…AYIG).

The protein belongs to the ATPase A chain family. As to quaternary structure, F-type ATPases have 2 components, CF(1) - the catalytic core - and CF(0) - the membrane proton channel. CF(1) has five subunits: alpha(3), beta(3), gamma(1), delta(1), epsilon(1). CF(0) has four main subunits: a, b, b' and c.

The protein resides in the plastid. The protein localises to the chloroplast thylakoid membrane. In terms of biological role, key component of the proton channel; it plays a direct role in the translocation of protons across the membrane. The chain is ATP synthase subunit a, chloroplastic from Physcomitrium patens (Spreading-leaved earth moss).